A 215-amino-acid polypeptide reads, in one-letter code: Glycerol-3-phosphate acyltransferase (215 aa).

The next 6 membrane-spanning stretches (helical) occupy residues 3–23, 42–61, 68–90, 110–130, 134–154, and 162–182; these read LILL…LWIG, TNTF…LIDI, TLLP…FAVL, AGVL…VFVL, LFSM…ISVL, and LLPG…AIII.

This sequence belongs to the PlsY family. Probably interacts with PlsX.

It is found in the cell membrane. It catalyses the reaction an acyl phosphate + sn-glycerol 3-phosphate = a 1-acyl-sn-glycero-3-phosphate + phosphate. It functions in the pathway lipid metabolism; phospholipid metabolism. Its function is as follows. Catalyzes the transfer of an acyl group from acyl-phosphate (acyl-PO(4)) to glycerol-3-phosphate (G3P) to form lysophosphatidic acid (LPA). This enzyme utilizes acyl-phosphate as fatty acyl donor, but not acyl-CoA or acyl-ACP. This is Glycerol-3-phosphate acyltransferase from Streptococcus equi subsp. zooepidemicus (strain H70).